We begin with the raw amino-acid sequence, 427 residues long: Protein TIFY 6a (427 aa).

Positions 1 to 25 are enriched in basic and acidic residues; it reads MERDFLGAIWRKEEAAGKPEEHSDY. Disordered stretches follow at residues 1-32 and 128-154; these read MERDFLGAIWRKEEAAGKPEEHSDYRGGGGGA and YGVAAPHHFPSPSPSPRHPVPFGHANP. Residues 136–146 are compositionally biased toward pro residues; the sequence is FPSPSPSPRHP. The 36-residue stretch at 196–231 folds into the Tify domain; it reads QNPKVTQMTIFYDGLVNVFDNIPVEKAQELMLLASR. A disordered region spans residues 296 to 327; it reads SFSSSNDSAGPKSGGLPLAVTPLSQASPSQPI. Residues 317-327 show a composition bias toward polar residues; that stretch reads PLSQASPSQPI. Residues 343–367 carry the Jas motif; it reads PQARKASLARFLEKRKERVSSVAPY. The Nuclear localization signal signature appears at 345–352; the sequence is ARKASLAR. Residues 361–427 are disordered; the sequence is VSSVAPYPSS…QEPPSTKLQI (67 aa). Composition is skewed to polar residues over residues 369–402 and 411–427; these read SSKSPLESSDTIGSPSTPSKSSCTDITPSTNNCE and RNISFSSQEPPSTKLQI.

The protein belongs to the TIFY/JAZ family. Interacts with COI1A. Interacts with COI1A and COI1B in a coronatine-dependent manner. Coronatine is an analog of jasmonoyl isoleucine (JA-Ile). Post-translationally, ubiquitinated. Targeted for degradation by the SCF(COI1) E3 ubiquitin ligase-proteasome pathway during jasmonate signaling.

Its subcellular location is the nucleus. Repressor of jasmonate responses. This is Protein TIFY 6a from Oryza sativa subsp. japonica (Rice).